The primary structure comprises 195 residues: FMN-dependent NADH:quinone oxidoreductase (195 aa).

Residues serine 10, 16-18 (SQS), 91-94 (MYNF), and 135-138 (TRGG) contribute to the FMN site.

This sequence belongs to the azoreductase type 1 family. Homodimer. Requires FMN as cofactor.

The enzyme catalyses 2 a quinone + NADH + H(+) = 2 a 1,4-benzosemiquinone + NAD(+). It carries out the reaction N,N-dimethyl-1,4-phenylenediamine + anthranilate + 2 NAD(+) = 2-(4-dimethylaminophenyl)diazenylbenzoate + 2 NADH + 2 H(+). Its function is as follows. Quinone reductase that provides resistance to thiol-specific stress caused by electrophilic quinones. Functionally, also exhibits azoreductase activity. Catalyzes the reductive cleavage of the azo bond in aromatic azo compounds to the corresponding amines. The protein is FMN-dependent NADH:quinone oxidoreductase of Vibrio vulnificus (strain YJ016).